We begin with the raw amino-acid sequence, 575 residues long: DNA mismatch repair protein MutL (575 aa).

It belongs to the DNA mismatch repair MutL/HexB family.

Functionally, this protein is involved in the repair of mismatches in DNA. It is required for dam-dependent methyl-directed DNA mismatch repair. May act as a 'molecular matchmaker', a protein that promotes the formation of a stable complex between two or more DNA-binding proteins in an ATP-dependent manner without itself being part of a final effector complex. The protein is DNA mismatch repair protein MutL of Dictyoglomus thermophilum (strain ATCC 35947 / DSM 3960 / H-6-12).